Reading from the N-terminus, the 152-residue chain is Transcriptional regulator MraZ (152 aa).

SpoVT-AbrB domains are found at residues 5–52 (ATLV…PLPE) and 81–124 (ASEC…DEQT).

The protein belongs to the MraZ family. As to quaternary structure, forms oligomers.

Its subcellular location is the cytoplasm. It is found in the nucleoid. Negatively regulates its own expression and that of the subsequent genes in the proximal part of the division and cell wall (dcw) gene cluster. Acts by binding directly to DNA. May also regulate the expression of genes outside the dcw cluster. This is Transcriptional regulator MraZ from Pectobacterium carotovorum subsp. carotovorum (strain PC1).